We begin with the raw amino-acid sequence, 301 residues long: uncharacterized protein (301 aa).

The Extracellular portion of the chain corresponds to 1–5 (MSYKK). A helical transmembrane segment spans residues 6 to 26 (FVYFINLFFLLGATLLTFFLI). The Cytoplasmic portion of the chain corresponds to 27–112 (LAGGRTTGVL…NRNAYYYLSR (86 aa)). A helical membrane pass occupies residues 113–133 (VGWAMLLIGLFFLLITLVSVI). At 134-143 (ASLIRYNRRT) the chain is on the extracellular side. Residues 144-164 (AALATAMSWITLFFITLSACL) form a helical membrane-spanning segment. Residues 165–191 (YTGCYAKAVKAFHHENRDARLGPKNFG) are Cytoplasmic-facing. A helical transmembrane segment spans residues 192–212 (LIWTTVFLLIVNAICCTIMVA). The Extracellular segment spans residues 213 to 301 (THKRNEYIYD…YTEQNVPVVS (89 aa)). The tract at residues 254–301 (VQQSQSHQNHRFFKKLRTKKRTVTSAGDEPDRVQEERVYTEQNVPVVS) is disordered. Residues 261 to 275 (QNHRFFKKLRTKKRT) are compositionally biased toward basic residues. Residues 282 to 292 (EPDRVQEERVY) show a composition bias toward basic and acidic residues.

It belongs to the SUR7 family.

Its subcellular location is the cell membrane. Involved in sporulation and affects the sphingolipid composition of the plasma membrane. This is an uncharacterized protein from Saccharomyces cerevisiae (strain ATCC 204508 / S288c) (Baker's yeast).